The primary structure comprises 75 residues: Exodeoxyribonuclease 7 small subunit (75 aa).

Belongs to the XseB family. Heterooligomer composed of large and small subunits.

The protein localises to the cytoplasm. The catalysed reaction is Exonucleolytic cleavage in either 5'- to 3'- or 3'- to 5'-direction to yield nucleoside 5'-phosphates.. In terms of biological role, bidirectionally degrades single-stranded DNA into large acid-insoluble oligonucleotides, which are then degraded further into small acid-soluble oligonucleotides. This chain is Exodeoxyribonuclease 7 small subunit, found in Nostoc punctiforme (strain ATCC 29133 / PCC 73102).